The sequence spans 84 residues: Small ribosomal subunit protein bS16 (84 aa).

It belongs to the bacterial ribosomal protein bS16 family.

The polypeptide is Small ribosomal subunit protein bS16 (Paraburkholderia phytofirmans (strain DSM 17436 / LMG 22146 / PsJN) (Burkholderia phytofirmans)).